We begin with the raw amino-acid sequence, 376 residues long: Chaperone protein DnaJ (376 aa).

The J domain occupies 5 to 70 (DYYEVLGVGR…DKKAAYDQFG (66 aa)). A CR-type zinc finger spans residues 132–210 (GLTKELRIPT…CHGEGRVEKS (79 aa)). Positions 145, 148, 162, 165, 184, 187, 198, and 201 each coordinate Zn(2+). CXXCXGXG motif repeat units follow at residues 145–152 (CDSCDGSG), 162–169 (CGTCHGQG), 184–191 (CPTCHGRG), and 198–205 (CNKCHGEG).

It belongs to the DnaJ family. Homodimer. It depends on Zn(2+) as a cofactor.

Its subcellular location is the cytoplasm. Participates actively in the response to hyperosmotic and heat shock by preventing the aggregation of stress-denatured proteins and by disaggregating proteins, also in an autonomous, DnaK-independent fashion. Unfolded proteins bind initially to DnaJ; upon interaction with the DnaJ-bound protein, DnaK hydrolyzes its bound ATP, resulting in the formation of a stable complex. GrpE releases ADP from DnaK; ATP binding to DnaK triggers the release of the substrate protein, thus completing the reaction cycle. Several rounds of ATP-dependent interactions between DnaJ, DnaK and GrpE are required for fully efficient folding. Also involved, together with DnaK and GrpE, in the DNA replication of plasmids through activation of initiation proteins. This chain is Chaperone protein DnaJ, found in Shewanella pealeana (strain ATCC 700345 / ANG-SQ1).